The following is a 121-amino-acid chain: ATP synthase epsilon chain (121 aa).

It belongs to the ATPase epsilon chain family. As to quaternary structure, F-type ATPases have 2 components, CF(1) - the catalytic core - and CF(0) - the membrane proton channel. CF(1) has five subunits: alpha(3), beta(3), gamma(1), delta(1), epsilon(1). CF(0) has three main subunits: a, b and c.

The protein localises to the cell membrane. Its function is as follows. Produces ATP from ADP in the presence of a proton gradient across the membrane. The chain is ATP synthase epsilon chain from Mycolicibacterium vanbaalenii (strain DSM 7251 / JCM 13017 / BCRC 16820 / KCTC 9966 / NRRL B-24157 / PYR-1) (Mycobacterium vanbaalenii).